The chain runs to 360 residues: 4-hydroxy-3-methylbut-2-en-1-yl diphosphate synthase (flavodoxin) (360 aa).

Residues Cys265, Cys268, Cys300, and Glu307 each coordinate [4Fe-4S] cluster.

The protein belongs to the IspG family. [4Fe-4S] cluster is required as a cofactor.

It carries out the reaction (2E)-4-hydroxy-3-methylbut-2-enyl diphosphate + oxidized [flavodoxin] + H2O + 2 H(+) = 2-C-methyl-D-erythritol 2,4-cyclic diphosphate + reduced [flavodoxin]. Its pathway is isoprenoid biosynthesis; isopentenyl diphosphate biosynthesis via DXP pathway; isopentenyl diphosphate from 1-deoxy-D-xylulose 5-phosphate: step 5/6. In terms of biological role, converts 2C-methyl-D-erythritol 2,4-cyclodiphosphate (ME-2,4cPP) into 1-hydroxy-2-methyl-2-(E)-butenyl 4-diphosphate. This is 4-hydroxy-3-methylbut-2-en-1-yl diphosphate synthase (flavodoxin) from Brevibacillus brevis (strain 47 / JCM 6285 / NBRC 100599).